We begin with the raw amino-acid sequence, 754 residues long: 5-methyltetrahydropteroyltriglutamate--homocysteine methyltransferase (754 aa).

Residues 15–18 (RELK) and Lys-114 each bind 5-methyltetrahydropteroyltri-L-glutamate. L-homocysteine contacts are provided by residues 430–432 (IGS) and Glu-483. L-methionine is bound by residues 430 to 432 (IGS) and Glu-483. 5-methyltetrahydropteroyltri-L-glutamate contacts are provided by residues 514–515 (RC) and Trp-560. Asp-598 is a binding site for L-homocysteine. An L-methionine-binding site is contributed by Asp-598. Glu-604 provides a ligand contact to 5-methyltetrahydropteroyltri-L-glutamate. Residues His-641, Cys-643, and Glu-665 each contribute to the Zn(2+) site. His-694 (proton donor) is an active-site residue. Cys-726 lines the Zn(2+) pocket.

It belongs to the vitamin-B12 independent methionine synthase family. Zn(2+) is required as a cofactor.

The enzyme catalyses 5-methyltetrahydropteroyltri-L-glutamate + L-homocysteine = tetrahydropteroyltri-L-glutamate + L-methionine. The protein operates within amino-acid biosynthesis; L-methionine biosynthesis via de novo pathway; L-methionine from L-homocysteine (MetE route): step 1/1. In terms of biological role, catalyzes the transfer of a methyl group from 5-methyltetrahydrofolate to homocysteine resulting in methionine formation. In Campylobacter jejuni subsp. jejuni serotype O:6 (strain 81116 / NCTC 11828), this protein is 5-methyltetrahydropteroyltriglutamate--homocysteine methyltransferase.